The primary structure comprises 127 residues: UPF0102 protein NFA_41430 (127 aa).

Belongs to the UPF0102 family.

The chain is UPF0102 protein NFA_41430 from Nocardia farcinica (strain IFM 10152).